Reading from the N-terminus, the 334-residue chain is N-acetyl-gamma-glutamyl-phosphate reductase (334 aa).

Residue Cys154 is part of the active site.

It belongs to the NAGSA dehydrogenase family. Type 1 subfamily.

The protein resides in the cytoplasm. The enzyme catalyses N-acetyl-L-glutamate 5-semialdehyde + phosphate + NADP(+) = N-acetyl-L-glutamyl 5-phosphate + NADPH + H(+). The protein operates within amino-acid biosynthesis; L-arginine biosynthesis; N(2)-acetyl-L-ornithine from L-glutamate: step 3/4. Functionally, catalyzes the NADPH-dependent reduction of N-acetyl-5-glutamyl phosphate to yield N-acetyl-L-glutamate 5-semialdehyde. This chain is N-acetyl-gamma-glutamyl-phosphate reductase, found in Yersinia pestis.